A 212-amino-acid polypeptide reads, in one-letter code: 3-isopropylmalate dehydratase small subunit 2 (212 aa).

This sequence belongs to the LeuD family. LeuD type 1 subfamily. In terms of assembly, heterodimer of LeuC and LeuD.

The enzyme catalyses (2R,3S)-3-isopropylmalate = (2S)-2-isopropylmalate. The protein operates within amino-acid biosynthesis; L-leucine biosynthesis; L-leucine from 3-methyl-2-oxobutanoate: step 2/4. In terms of biological role, catalyzes the isomerization between 2-isopropylmalate and 3-isopropylmalate, via the formation of 2-isopropylmaleate. The sequence is that of 3-isopropylmalate dehydratase small subunit 2 from Chromobacterium violaceum (strain ATCC 12472 / DSM 30191 / JCM 1249 / CCUG 213 / NBRC 12614 / NCIMB 9131 / NCTC 9757 / MK).